A 92-amino-acid chain; its full sequence is Elongation factor 1-beta (92 aa).

The protein belongs to the EF-1-beta/EF-1-delta family.

Its function is as follows. Promotes the exchange of GDP for GTP in EF-1-alpha/GDP, thus allowing the regeneration of EF-1-alpha/GTP that could then be used to form the ternary complex EF-1-alpha/GTP/AAtRNA. The polypeptide is Elongation factor 1-beta (Hyperthermus butylicus (strain DSM 5456 / JCM 9403 / PLM1-5)).